A 510-amino-acid chain; its full sequence is 2,3-bisphosphoglycerate-independent phosphoglycerate mutase (510 aa).

Asp12 contacts Mn(2+). The residue at position 36 (Tyr36) is a Phosphotyrosine. Position 62 (Ser62) interacts with Mn(2+). Ser62 acts as the Phosphoserine intermediate in catalysis. Residues His123, 153–154, Arg185, Arg191, 261–264, and Lys336 contribute to the substrate site; these read RD and RPDR. Mn(2+) is bound by residues Asp403, His407, Asp444, His445, and His462.

Belongs to the BPG-independent phosphoglycerate mutase family. In terms of assembly, monomer. Mn(2+) is required as a cofactor.

It catalyses the reaction (2R)-2-phosphoglycerate = (2R)-3-phosphoglycerate. Its pathway is carbohydrate degradation; glycolysis; pyruvate from D-glyceraldehyde 3-phosphate: step 3/5. Essential for rapid growth and for sporulation. Catalyzes the interconversion of 2-phosphoglycerate and 3-phosphoglycerate. The polypeptide is 2,3-bisphosphoglycerate-independent phosphoglycerate mutase (Shouchella clausii (strain KSM-K16) (Alkalihalobacillus clausii)).